The following is a 314-amino-acid chain: Acetyl-coenzyme A carboxylase carboxyl transferase subunit alpha (314 aa).

Residues 38-292 (RLERKSAALL…ANAIDEELDA (255 aa)) form the CoA carboxyltransferase C-terminal domain.

This sequence belongs to the AccA family. Acetyl-CoA carboxylase is a heterohexamer composed of biotin carboxyl carrier protein (AccB), biotin carboxylase (AccC) and two subunits each of ACCase subunit alpha (AccA) and ACCase subunit beta (AccD).

The protein resides in the cytoplasm. The catalysed reaction is N(6)-carboxybiotinyl-L-lysyl-[protein] + acetyl-CoA = N(6)-biotinyl-L-lysyl-[protein] + malonyl-CoA. It participates in lipid metabolism; malonyl-CoA biosynthesis; malonyl-CoA from acetyl-CoA: step 1/1. Its function is as follows. Component of the acetyl coenzyme A carboxylase (ACC) complex. First, biotin carboxylase catalyzes the carboxylation of biotin on its carrier protein (BCCP) and then the CO(2) group is transferred by the carboxyltransferase to acetyl-CoA to form malonyl-CoA. This Erythrobacter litoralis (strain HTCC2594) protein is Acetyl-coenzyme A carboxylase carboxyl transferase subunit alpha.